We begin with the raw amino-acid sequence, 453 residues long: MAVALLFILVIGMMIVGVPIAISLGLSSILFLLWHSDASLASVAQTLFNAFAGHYTLLAIPFFILASTFMSTGGVAKRIIRFAIAMVGWFRGGLAIASVVACMMFAALSGSSPATVVAIGSIVIAGMVKNGYSKEFAAGVICNAGTLGILIPPSIVMVVYSAATNVSVGRMFLGGVVPGLLAGLMLIIAIYITARIKNLPKQPFVGWKEALKAAKEASWGLLLVVIILGGIYGGIFTPTEAAAVAAVYSFFIANFIYRDMGPFADKTNTKPVLVKVVETFVHKDTKATLYDAGKLTIMLMFIIANALILKHVLTEERIPQMITESMLSAGLGPITFLIVVNLILLVGGQFMEPSGLLVIVAPLVFPIAIALGIDPIHLGIMMVVNMEIGMITPPVGLNLFVTSGVAKMSMMNVVKAALPWVGVMFLFLIIVTYVPWVSTWLPTLLMGPEIITR.

13 helical membrane-spanning segments follow: residues 2-22, 50-70, 82-102, 104-124, 139-159, 172-192, 217-237, 243-263, 289-309, 326-346, 356-376, 380-400, and 417-437; these read AVALLFILVIGMMIVGVPIAI, AFAGHYTLLAIPFFILASTFM, FAIAMVGWFRGGLAIASVVAC, MFAALSGSSPATVVAIGSIVI, GVICNAGTLGILIPPSIVMVV, FLGGVVPGLLAGLMLIIAIYI, ASWGLLLVVIILGGIYGGIFT, AVAAVYSFFIANFIYRDMGPF, LYDAGKLTIMLMFIIANALIL, MLSAGLGPITFLIVVNLILLV, LLVIVAPLVFPIAIALGIDPI, IMMVVNMEIGMITPPVGLNLF, and ALPWVGVMFLFLIIVTYVPWV.

Belongs to the TRAP transporter large permease family. In terms of assembly, the complex comprises the extracytoplasmic solute receptor protein DctP, and the two transmembrane proteins DctQ and DctM.

It localises to the cell inner membrane. Part of the tripartite ATP-independent periplasmic (TRAP) transport system DctPQM involved in C4-dicarboxylates uptake. This chain is C4-dicarboxylate TRAP transporter large permease protein DctM, found in Vibrio cholerae serotype O1 (strain ATCC 39315 / El Tor Inaba N16961).